Reading from the N-terminus, the 540-residue chain is 2-isopropylmalate synthase (540 aa).

The region spanning 8–269 (VLIFDTTLRD…YFNPFFGRAE (262 aa)) is the Pyruvate carboxyltransferase domain. The Mn(2+) site is built by Asp17, His208, His210, and Asn244. A regulatory domain region spans residues 408–540 (QLKLVQVSCG…ATPLDASPTL (133 aa)).

It belongs to the alpha-IPM synthase/homocitrate synthase family. LeuA type 1 subfamily. Homodimer. Mn(2+) is required as a cofactor.

It localises to the cytoplasm. The catalysed reaction is 3-methyl-2-oxobutanoate + acetyl-CoA + H2O = (2S)-2-isopropylmalate + CoA + H(+). The protein operates within amino-acid biosynthesis; L-leucine biosynthesis; L-leucine from 3-methyl-2-oxobutanoate: step 1/4. Its function is as follows. Catalyzes the condensation of the acetyl group of acetyl-CoA with 3-methyl-2-oxobutanoate (2-ketoisovalerate) to form 3-carboxy-3-hydroxy-4-methylpentanoate (2-isopropylmalate). The polypeptide is 2-isopropylmalate synthase (Synechococcus sp. (strain WH7803)).